Here is a 770-residue protein sequence, read N- to C-terminus: Protein PAT1 homolog 1 (770 aa).

The interval 1–26 is disordered; the sequence is MFRYESLEDCPLDEDEDAFQGLGEED. The tract at residues 1-84 is region A; interaction with DDX6/RCK; that stretch reads MFRYESLEDC…EMDLLGDHEE (84 aa). The segment at 1-397 is involved in nuclear foci localization; that stretch reads MFRYESLEDC…HRSSHQDHLR (397 aa). The segment covering 7–26 has biased composition (acidic residues); it reads LEDCPLDEDEDAFQGLGEED. The segment at 85–388 is region N; interaction with decapping machinery; that stretch reads NLAERLSKMV…LNGAGDRGSH (304 aa). The Nuclear export signal signature appears at 86-95; sequence LAERLSKMVI. At S177 the chain carries Phosphoserine. T178 is subject to Phosphothreonine. A phosphoserine mark is found at S179 and S184. Residue T194 is modified to Phosphothreonine. Asymmetric dimethylarginine is present on residues R217, R223, and R263. Positions 223–397 are involved in RNA-binding; it reads RYPAPYGERM…HRSSHQDHLR (175 aa). The residue at position 278 (S278) is a Phosphoserine. The residue at position 284 (R284) is an Asymmetric dimethylarginine. 2 disordered regions span residues 315–344 and 360–400; these read FRAF…QNLR and QHRR…RKDP. Pro residues predominate over residues 324–337; the sequence is SATPPPQQHPPGPG. Residues 367–380 are compositionally biased toward low complexity; it reads QRQQQNRNQHRNLN. R385 is subject to Omega-N-methylarginine. The span at 385–400 shows a compositional bias: basic and acidic residues; it reads RGSHRSSHQDHLRKDP. Residues 389–448 are region H; the sequence is RSSHQDHLRKDPYANLMLQREKDWVSKIQMMQLQSTDPYLDDFYYQNYFEKLEKLSAAEE. The tract at residues 398 to 770 is involved in nuclear speckle localization; it reads KDPYANLMLQ…TKLQLVQGIR (373 aa). A region C region spans residues 449–770; it reads IQGDGPKKER…TKLQLVQGIR (322 aa).

Belongs to the PAT1 family. In terms of assembly, interacts (via region A) with DDX6/RCK. Interacts (via region H and region C) with LSM1 and LSM4. Interacts (via region N) with DCP1A, DCP2, EDC3, EDC4 and XRN1. Interacts with the CCR4-NOT complex. Interacts with the Lsm-containing SMN-Sm protein complex. Interacts with EIF4ENIF1/4E-T.

It localises to the cytoplasm. The protein resides in the P-body. Its subcellular location is the nucleus. The protein localises to the PML body. It is found in the nucleus speckle. Its function is as follows. RNA-binding protein involved in deadenylation-dependent decapping of mRNAs, leading to the degradation of mRNAs. Acts as a scaffold protein that connects deadenylation and decapping machinery. Required for cytoplasmic mRNA processing body (P-body) assembly. This chain is Protein PAT1 homolog 1 (PATL1), found in Pongo abelii (Sumatran orangutan).